The following is a 425-amino-acid chain: Histidine--tRNA ligase (425 aa).

The protein belongs to the class-II aminoacyl-tRNA synthetase family. In terms of assembly, homodimer.

It localises to the cytoplasm. It catalyses the reaction tRNA(His) + L-histidine + ATP = L-histidyl-tRNA(His) + AMP + diphosphate + H(+). The sequence is that of Histidine--tRNA ligase from Shewanella sp. (strain ANA-3).